The following is a 715-amino-acid chain: Inducible lysine decarboxylase (715 aa).

Lysine 367 is subject to N6-(pyridoxal phosphate)lysine.

This sequence belongs to the Orn/Lys/Arg decarboxylase class-I family. In terms of assembly, homodecamer. Interacts with RavA. The cofactor is pyridoxal 5'-phosphate.

Its subcellular location is the cytoplasm. The enzyme catalyses L-lysine + H(+) = cadaverine + CO2. The protein is Inducible lysine decarboxylase (cadA) of Escherichia coli O157:H7.